The chain runs to 474 residues: ATP synthase subunit beta (474 aa).

151 to 158 (GGAGVGKT) contacts ATP.

It belongs to the ATPase alpha/beta chains family. As to quaternary structure, F-type ATPases have 2 components, CF(1) - the catalytic core - and CF(0) - the membrane proton channel. CF(1) has five subunits: alpha(3), beta(3), gamma(1), delta(1), epsilon(1). CF(0) has three main subunits: a(1), b(2) and c(9-12). The alpha and beta chains form an alternating ring which encloses part of the gamma chain. CF(1) is attached to CF(0) by a central stalk formed by the gamma and epsilon chains, while a peripheral stalk is formed by the delta and b chains.

Its subcellular location is the cell inner membrane. The enzyme catalyses ATP + H2O + 4 H(+)(in) = ADP + phosphate + 5 H(+)(out). Functionally, produces ATP from ADP in the presence of a proton gradient across the membrane. The catalytic sites are hosted primarily by the beta subunits. In Ruegeria sp. (strain TM1040) (Silicibacter sp.), this protein is ATP synthase subunit beta.